A 434-amino-acid polypeptide reads, in one-letter code: 3-phosphoshikimate 1-carboxyvinyltransferase (434 aa).

Residues lysine 15, serine 16, and arginine 20 each contribute to the 3-phosphoshikimate site. Residue lysine 15 coordinates phosphoenolpyruvate. Positions 96 and 124 each coordinate phosphoenolpyruvate. 3-phosphoshikimate-binding residues include serine 169, glutamine 171, serine 195, aspartate 319, and lysine 346. Residue glutamine 171 coordinates phosphoenolpyruvate. Aspartate 319 (proton acceptor) is an active-site residue. Residues arginine 350 and arginine 394 each contribute to the phosphoenolpyruvate site.

It belongs to the EPSP synthase family. As to quaternary structure, monomer.

Its subcellular location is the cytoplasm. It catalyses the reaction 3-phosphoshikimate + phosphoenolpyruvate = 5-O-(1-carboxyvinyl)-3-phosphoshikimate + phosphate. The protein operates within metabolic intermediate biosynthesis; chorismate biosynthesis; chorismate from D-erythrose 4-phosphate and phosphoenolpyruvate: step 6/7. Catalyzes the transfer of the enolpyruvyl moiety of phosphoenolpyruvate (PEP) to the 5-hydroxyl of shikimate-3-phosphate (S3P) to produce enolpyruvyl shikimate-3-phosphate and inorganic phosphate. The polypeptide is 3-phosphoshikimate 1-carboxyvinyltransferase (Chlorobaculum parvum (strain DSM 263 / NCIMB 8327) (Chlorobium vibrioforme subsp. thiosulfatophilum)).